Consider the following 1248-residue polypeptide: ABC transporter B family member 7 (1248 aa).

Transmembrane regions (helical) follow at residues 32-52, 82-102, 158-175, 179-201, 261-281, and 299-321; these read IVLM…QPFM, FLYL…CWMV, FTQL…AFIV, LTLA…TYIM, GLGI…AIWY, and VITS…NSFA. Residues 35 to 322 form the ABC transmembrane type-1 1 domain; sequence MVIGTLSAMA…TLPSLNSFAA (288 aa). Positions 357-593 constitute an ABC transporter 1 domain; it reads IELRDVYFRY…PEGTYSQLVR (237 aa). An ATP-binding site is contributed by 392–399; that stretch reads GQSGSGKS. N-linked (GlcNAc...) asparagine glycans are attached at residues N473 and N652. Residues 682 to 702 form a helical membrane-spanning segment; sequence VLLLGSLAAVIHGIVFPVQGL. Positions 683-970 constitute an ABC transmembrane type-1 2 domain; it reads LLLGSLAAVI…TSTMAPDINK (288 aa). N-linked (GlcNAc...) asparagine glycosylation occurs at N720. Residues 722–742 traverse the membrane as a helical segment; that stretch reads SLFWALIFVALGLTDLIVIPL. N779 carries an N-linked (GlcNAc...) asparagine glycan. The next 4 membrane-spanning stretches (helical) occupy residues 813–833, 834–854, 914–934, and 939–959; these read IIGA…MALL, VAPV…GFGA, GSYL…SWLI, and ATFG…VGVT. An ABC transporter 2 domain is found at 1005–1242; it reads IELQHVSFRY…SGGAYASLVA (238 aa). 1040-1047 is an ATP binding site; it reads GESGSGKS. N1094, N1193, and N1244 each carry an N-linked (GlcNAc...) asparagine glycan.

Belongs to the ABC transporter superfamily. ABCB family. Multidrug resistance exporter (TC 3.A.1.201) subfamily.

It is found in the membrane. The protein is ABC transporter B family member 7 (ABCB7) of Arabidopsis thaliana (Mouse-ear cress).